The primary structure comprises 589 residues: Poly(3-hydroxyalkanoate) polymerase subunit PhaC (589 aa).

The disordered stretch occupies residues 1–23 (MATGKGAAASTQEGKSQPFKVTP). Residue Cys-319 is part of the active site.

It belongs to the PHA/PHB synthase family. Type I PhaC subfamily. As to quaternary structure, monomer.

The protein resides in the cytoplasm. The catalysed reaction is (3R)-3-hydroxybutanoyl-CoA + [(3R)-hydroxybutanoate](n) = [(3R)-hydroxybutanoate](n+1) + CoA. Its pathway is biopolymer metabolism; poly-(R)-3-hydroxybutanoate biosynthesis. Polymerizes (R)-3-hydroxybutyryl-CoA to create polyhydroxybutyrate (PHB) which consists of thousands of hydroxybutyrate molecules linked end to end. PHB serves as an intracellular energy reserve material when cells grow under conditions of nutrient limitation. This Cupriavidus necator (strain ATCC 17699 / DSM 428 / KCTC 22496 / NCIMB 10442 / H16 / Stanier 337) (Ralstonia eutropha) protein is Poly(3-hydroxyalkanoate) polymerase subunit PhaC.